Consider the following 208-residue polypeptide: LexA repressor (208 aa).

Residues 28–48 (RAEIARELGFRSANAAEEHLK) constitute a DNA-binding region (H-T-H motif). Active-site for autocatalytic cleavage activity residues include Ser125 and Lys162.

The protein belongs to the peptidase S24 family. Homodimer.

It carries out the reaction Hydrolysis of Ala-|-Gly bond in repressor LexA.. Represses a number of genes involved in the response to DNA damage (SOS response), including recA and lexA. In the presence of single-stranded DNA, RecA interacts with LexA causing an autocatalytic cleavage which disrupts the DNA-binding part of LexA, leading to derepression of the SOS regulon and eventually DNA repair. The polypeptide is LexA repressor (Aliivibrio fischeri (strain ATCC 700601 / ES114) (Vibrio fischeri)).